Consider the following 630-residue polypeptide: CREB-regulated transcription coactivator 1 (630 aa).

Phosphoserine is present on residues S64 and S113. 4 disordered regions span residues A142–D174, G187–I221, S256–L331, and Q356–T475. Position 149 is a phosphothreonine (T149). A Phosphoserine; by SIK1 and SIK2 modification is found at S151. Residues S151 to S167 show a composition bias toward polar residues. At T161 the chain carries Phosphothreonine. Positions E194 to K208 are enriched in basic and acidic residues. A Nuclear export signal motif is present at residues T242–L258. Residues S256 to P270 show a composition bias toward pro residues. 2 stretches are compositionally biased toward polar residues: residues G292 to Q301 and L310 to L331. Residues Q361 to Q384 show a composition bias toward pro residues. Residues V385–P394 are compositionally biased toward low complexity. Composition is skewed to polar residues over residues V414–P426 and P450–T475.

Belongs to the TORC family. As to quaternary structure, binds, as a tetramer, through its N-terminal region, with the bZIP domain of CREB1. 'Arg-314' in the bZIP domain of CREB1 is essential for this interaction. Interaction, via its C-terminal, with TAF4, enhances recruitment of TAF4 to CREB1. Interacts with 14-3-3 proteins, including YWHAE/14-3-3 epsilon. Interacts with calmodulin-dependent catalytic subunit PPP3CA/calcineurin A. In terms of processing, phosphorylation/dephosphorylation states of Ser-151 are required for regulating transduction of CREB activity. TORCs are inactive when phosphorylated, and active when dephosphorylated at this site. This primary site of phosphorylation is mediated by SIKs (SIK1 and SIK2), is regulated by cAMP and calcium levels and is dependent on the phosphorylation of SIKs by LKB1. As to expression, highly expressed in developing cortical neurons, peaking during dendrite development.

The protein localises to the cytoplasm. It localises to the nucleus. In terms of biological role, transcriptional coactivator for CREB1 which activates transcription through both consensus and variant cAMP response element (CRE) sites. Acts as a coactivator, in the SIK/TORC signaling pathway, being active when dephosphorylated and acts independently of CREB1 'Ser-133' phosphorylation. Enhances the interaction of CREB1 with TAF4. Regulates the expression of specific CREB-activated genes such as the steroidogenic gene, StAR. Potent coactivator of PGC1alpha and inducer of mitochondrial biogenesis in muscle cells. In the hippocampus, involved in late-phase long-term potentiation (L-LTP) maintenance at the Schaffer collateral-CA1 synapses. May be required for dendritic growth of developing cortical neurons. In concert with SIK1, regulates the light-induced entrainment of the circadian clock. In response to light stimulus, coactivates the CREB-mediated transcription of PER1 which plays an important role in the photic entrainment of the circadian clock. The sequence is that of CREB-regulated transcription coactivator 1 (Crtc1) from Rattus norvegicus (Rat).